Reading from the N-terminus, the 72-residue chain is Translation initiation factor IF-1 (72 aa).

Positions 1–72 constitute an S1-like domain; that stretch reads MAKDDVIEVE…NRGRITYRFK (72 aa). Tyrosine 60 bears the Phosphotyrosine mark.

It belongs to the IF-1 family. As to quaternary structure, component of the 30S ribosomal translation pre-initiation complex which assembles on the 30S ribosome in the order IF-2 and IF-3, IF-1 and N-formylmethionyl-tRNA(fMet); mRNA recruitment can occur at any time during PIC assembly.

Its subcellular location is the cytoplasm. In terms of biological role, one of the essential components for the initiation of protein synthesis. Stabilizes the binding of IF-2 and IF-3 on the 30S subunit to which N-formylmethionyl-tRNA(fMet) subsequently binds. Helps modulate mRNA selection, yielding the 30S pre-initiation complex (PIC). Upon addition of the 50S ribosomal subunit IF-1, IF-2 and IF-3 are released leaving the mature 70S translation initiation complex. This Bacillus thuringiensis (strain Al Hakam) protein is Translation initiation factor IF-1.